Here is a 269-residue protein sequence, read N- to C-terminus: Dermonecrotic toxin SpeSicTox-betaIB3 (269 aa).

H5 is an active-site residue. Mg(2+) is bound by residues E25 and D27. H41 functions as the Nucleophile in the catalytic mechanism. 2 disulfides stabilise this stretch: C45–C51 and C47–C191. D85 is a binding site for Mg(2+).

The protein belongs to the arthropod phospholipase D family. Class II subfamily. The cofactor is Mg(2+). In terms of tissue distribution, expressed by the venom gland.

The protein resides in the secreted. The enzyme catalyses an N-(acyl)-sphingosylphosphocholine = an N-(acyl)-sphingosyl-1,3-cyclic phosphate + choline. It carries out the reaction an N-(acyl)-sphingosylphosphoethanolamine = an N-(acyl)-sphingosyl-1,3-cyclic phosphate + ethanolamine. The catalysed reaction is a 1-acyl-sn-glycero-3-phosphocholine = a 1-acyl-sn-glycero-2,3-cyclic phosphate + choline. It catalyses the reaction a 1-acyl-sn-glycero-3-phosphoethanolamine = a 1-acyl-sn-glycero-2,3-cyclic phosphate + ethanolamine. Its function is as follows. Dermonecrotic toxins cleave the phosphodiester linkage between the phosphate and headgroup of certain phospholipids (sphingolipid and lysolipid substrates), forming an alcohol (often choline) and a cyclic phosphate. This toxin acts on sphingomyelin (SM). It may also act on ceramide phosphoethanolamine (CPE), lysophosphatidylcholine (LPC) and lysophosphatidylethanolamine (LPE), but not on lysophosphatidylserine (LPS), and lysophosphatidylglycerol (LPG). It acts by transphosphatidylation, releasing exclusively cyclic phosphate products as second products. Induces dermonecrosis, hemolysis, increased vascular permeability, edema, inflammatory response, and platelet aggregation. This is Dermonecrotic toxin SpeSicTox-betaIB3 from Sicarius peruensis (Six-eyed sand spider).